Consider the following 369-residue polypeptide: Dof zinc finger protein DOF2.5 (369 aa).

Residues 80-134 (LNCPRCNSTNTKFCYYNNYSLTQPRYFCKGCRRYWTEGGSLRNVPVGGSSRKNKR) form a Dof-type zinc finger. Residues Cys82, Cys85, Cys107, and Cys110 each coordinate Zn(2+). Disordered stretches follow at residues 120–149 (LRNVPVGGSSRKNKRSSSSSSSNILQTIPS), 203–224 (EGNGNITHQQQPSSSSSVYGSS), 284–304 (TDHQGLGHNSNNRSEALHSDH), and 322–369 (SSSI…GSSW). A compositionally biased stretch (low complexity) spans 214–224 (PSSSSSVYGSS). Positions 284–297 (TDHQGLGHNSNNRS) are enriched in polar residues. Low complexity predominate over residues 342-362 (NNNNNNNSSPNNGYWSGMFST).

In terms of tissue distribution, expressed in the vascular system of the mother plant, but not present in the seed and embryo. In maturing siliques, found all through the funiculus connecting the placenta to the ovule, but not in the ovule.

The protein localises to the nucleus. In terms of biological role, transcription factor specifically involved in the maternal control of seed germination. Regulates transcription by binding to a 5'-AA[AG]G-3' consensus core sequence. May ensure the activation of a component that would trigger germination as a consequence of red light perception. This chain is Dof zinc finger protein DOF2.5 (DOF2.5), found in Arabidopsis thaliana (Mouse-ear cress).